A 198-amino-acid chain; its full sequence is Recombination protein RecR (198 aa).

The C4-type zinc-finger motif lies at 57-72; that stretch reads CSVCGRLTDDDPCSIC. In terms of domain architecture, Toprim spans 80-175; the sequence is TTILVLEDSR…KVTRLARGLA (96 aa).

It belongs to the RecR family.

May play a role in DNA repair. It seems to be involved in an RecBC-independent recombinational process of DNA repair. It may act with RecF and RecO. The protein is Recombination protein RecR of Streptococcus pneumoniae (strain Hungary19A-6).